Here is a 170-residue protein sequence, read N- to C-terminus: MLPEPININKWIEENGHLLQPPVNNYCLHRGGFTIMIVGGPNERTDYHINETPEHFHQLKGAMCLKVVDDGEFRDIIINEGDSFLLPGNTPHNPVRFADTIGLVVEQDRPETALDRLRWYCSNCREIVHEAAFHLTDLGTQIKEAILAFDGDKESRTCKKCGTLNYSKPQ.

Arg-44 contributes to the O2 binding site. Residues His-48, Glu-54, and His-92 each coordinate Fe cation. Residue Glu-54 participates in substrate binding. Substrate-binding residues include Arg-96 and Glu-106. Cys-121, Cys-124, Cys-158, and Cys-161 together coordinate a divalent metal cation.

It belongs to the 3-HAO family. Fe(2+) serves as cofactor.

It is found in the cytoplasm. It catalyses the reaction 3-hydroxyanthranilate + O2 = (2Z,4Z)-2-amino-3-carboxymuconate 6-semialdehyde. Its pathway is cofactor biosynthesis; NAD(+) biosynthesis; quinolinate from L-kynurenine: step 3/3. Its function is as follows. Catalyzes the oxidative ring opening of 3-hydroxyanthranilate to 2-amino-3-carboxymuconate semialdehyde, which spontaneously cyclizes to quinolinate. The polypeptide is 3-hydroxyanthranilate 3,4-dioxygenase (Scheffersomyces stipitis (strain ATCC 58785 / CBS 6054 / NBRC 10063 / NRRL Y-11545) (Yeast)).